Here is a 500-residue protein sequence, read N- to C-terminus: MLSTSQSRSFKNKFRAAFWPVHNYELGKFIPISALMFCILFNQNILRILKDSILISEISAEIAGFAKVYCVTPVAALFVIIYAKMINHLTFEKIFYYLSAFFISCFILFAFVIYPNIHIFHVHPDTLSDWMNKYPHFKWYISLVGNWGYIVYYSLAELWPNIFYVLLFWQFTNELTTTEEAKRFYTLFSLFGNSSLILVGFLMMNLSSEDTIIKKFVSISDSKITLVQVSTTIVAIVAIICCLLVRFISKYIFTNPLFYAKIKKSRSTTQRMGLIKSFKYIAKSKYLWLLLICSAAFGFAINLVEAVWKAKIKELYPTVNTYAEFNSLYILWTGVAIIVMTIIGNNVMRMHNWFVAAVISPVIIMVTGILFFVLIVFDQQILSLFDGAILMSPLALAVSIGGIQNILAKGTKYSIWDTSREMLYIPLDDELKTKGKAAVDVISAKIGKSSSGLVQSIIFTLVPNATFTSISPILMVVFTFVCFAWIYAVRKIYFEYQKIT.

11 helical membrane-spanning segments follow: residues 26-46 (LGKF…QNIL), 62-82 (IAGF…VIIY), 94-114 (IFYY…FVIY), 149-169 (YIVY…LLFW), 184-204 (FYTL…FLMM), 224-244 (ITLV…CCLL), 287-307 (LWLL…VEAV), 328-348 (LYIL…NNVM), 357-377 (AVIS…LIVF), 381-401 (ILSL…VSIG), and 469-489 (SISP…IYAV).

The protein belongs to the ADP/ATP translocase tlc family.

Its subcellular location is the cell membrane. In terms of biological role, provides the rickettsial cell with host ATP in exchange for rickettsial ADP. This is an obligate exchange system. This energy acquiring activity is an important component of rickettsial parasitism. The polypeptide is ADP,ATP carrier protein 5 (tlcE) (Rickettsia typhi (strain ATCC VR-144 / Wilmington)).